Reading from the N-terminus, the 355-residue chain is Chemerin-like receptor 2 (355 aa).

The Extracellular portion of the chain corresponds to 1 to 41; sequence MEDLEETLFEEFENYSYALDYYSLESDLEEKVQLGVVHWVS. Asn14 is a glycosylation site (N-linked (GlcNAc...) asparagine). A helical transmembrane segment spans residues 42-62; it reads LVLYCLSFVLGIPGNAIVIWF. Over 63-73 the chain is Cytoplasmic; the sequence is TGFKWKKTVST. The chain crosses the membrane as a helical span at residues 74 to 94; it reads LWFLNLAIADFIFLLFLPLYI. At 95–112 the chain is on the extracellular side; that stretch reads SYVVMNFHWPFGIWLCKA. A disulfide bridge connects residues Cys110 and Cys187. Residues 113–133 form a helical membrane-spanning segment; sequence NSFTAQLNMFASVFFLTVISL. The Cytoplasmic portion of the chain corresponds to 134-154; that stretch reads DHYIHLIHPVLSHRHRTLKNS. A helical membrane pass occupies residues 155 to 175; that stretch reads LIVIIFIWLLASLIGGPALYF. Over 176–210 the chain is Extracellular; it reads RDTVEFNNHTLCYNNFQKHDPDLTVIRHHVLTWVK. A helical membrane pass occupies residues 211-231; that stretch reads FIVGYLFPLLTMSICYLCLIF. At 232–247 the chain is on the cytoplasmic side; that stretch reads KVKKRSILISSRHFWT. The chain crosses the membrane as a helical span at residues 248-268; sequence ILAVVVAFVVCWTPYHLFSIW. The Extracellular portion of the chain corresponds to 269–286; it reads ELTIHHNSYSHHVMQAGI. The chain crosses the membrane as a helical span at residues 287–307; it reads PLSTGLAFLNSCLNPILYVLI. Topologically, residues 308–355 are cytoplasmic; that stretch reads SKKFQARFRSSVAEILKYTLWEVSCSGTVSEQLRNSETKNLCLLETAQ.

This sequence belongs to the chemokine-like receptor (CMKLR) family.

It localises to the cell membrane. Receptor for chemoattractant adipokine chemerin/RARRES2 suggesting a role for this receptor in the regulation of inflammation and energy homesotasis. Signals mainly via beta-arrestin pathway. Binding of RARRES2 activates weakly G proteins, calcium mobilization and MAPK1/MAPK3 (ERK1/2) phosphorylation too. Acts also as a receptor for TAFA1, mediates its effects on neuronal stem-cell proliferation and differentiation via the activation of ROCK/ERK and ROCK/STAT3 signaling pathway. The chain is Chemerin-like receptor 2 (CMKLR2) from Macaca mulatta (Rhesus macaque).